The chain runs to 365 residues: Heme A synthase (365 aa).

5 helical membrane-spanning segments follow: residues 23–43 (LLRI…LVGG), 109–129 (LLAR…WLTG), 137–157 (LPLV…WWMV), 172–192 (LATH…ILRG), and 208–228 (GFAA…ALVA). Residue His-272 participates in heme binding. The next 3 membrane-spanning stretches (helical) occupy residues 274–294 (LGAY…ARAL), 303–323 (AVLF…TLLM), and 327–347 (IHVA…SVAH). His-333 lines the heme pocket.

This sequence belongs to the COX15/CtaA family. Type 2 subfamily. As to quaternary structure, interacts with CtaB. It depends on heme b as a cofactor.

Its subcellular location is the cell membrane. It carries out the reaction Fe(II)-heme o + 2 A + H2O = Fe(II)-heme a + 2 AH2. The protein operates within porphyrin-containing compound metabolism; heme A biosynthesis; heme A from heme O: step 1/1. Functionally, catalyzes the conversion of heme O to heme A by two successive hydroxylations of the methyl group at C8. The first hydroxylation forms heme I, the second hydroxylation results in an unstable dihydroxymethyl group, which spontaneously dehydrates, resulting in the formyl group of heme A. This Agrobacterium fabrum (strain C58 / ATCC 33970) (Agrobacterium tumefaciens (strain C58)) protein is Heme A synthase.